The sequence spans 173 residues: Small ribosomal subunit protein uS5 (173 aa).

The S5 DRBM domain occupies Trp-17 to Val-80.

This sequence belongs to the universal ribosomal protein uS5 family. As to quaternary structure, part of the 30S ribosomal subunit. Contacts proteins S4 and S8.

With S4 and S12 plays an important role in translational accuracy. In terms of biological role, located at the back of the 30S subunit body where it stabilizes the conformation of the head with respect to the body. The protein is Small ribosomal subunit protein uS5 of Synechocystis sp. (strain ATCC 27184 / PCC 6803 / Kazusa).